The following is a 309-amino-acid chain: MEMO1 family protein C4H3.04c (309 aa).

The protein belongs to the MEMO1 family.

The protein is MEMO1 family protein C4H3.04c of Schizosaccharomyces pombe (strain 972 / ATCC 24843) (Fission yeast).